We begin with the raw amino-acid sequence, 441 residues long: MNQAAAPKVSFVSLGCPKALVDSERIITRLRAEGYELARKHDGADLVIVNTCGFLDSAKKESLGAIGEAMAANGKVIVTGCMGAEPEQIEAAYPNLLSITGPQQYESVLDAVHRALPPLHNPHLDLVPAQGIKLTPRHYAYLKISEGCNNRCSFCIIPKLRGDLVSRPAGEVLREAEKLVKAGVKELLVVSQDTSAYGVDLKYAESPWQDRNVRARFYDLAKELGELGAWVRLQYVYPYPHVDEVIGLMAQGKVLPYLDIPFQHASPEVLKQMKRPAAQDKTLARIKQWREICPELTLRSTFIVGFPGETDSDFAYLLDWLEQAEIDRVGAFKYEAVRGATSNALPDQVSDEVKTERWNALMARQQKISARRLKRKVGTRQQVIIDEVGPTVSKGRSKADAPQIDGSVYLTSRRPLRVGEIVTAKIERADAYDLHGSVAGF.

The region spanning 7–117 (PKVSFVSLGC…VLDAVHRALP (111 aa)) is the MTTase N-terminal domain. Residues C16, C52, C81, C148, C152, and C155 each coordinate [4Fe-4S] cluster. The Radical SAM core domain occupies 134 to 371 (LTPRHYAYLK…MARQQKISAR (238 aa)). One can recognise a TRAM domain in the interval 374–440 (KRKVGTRQQV…AYDLHGSVAG (67 aa)).

The protein belongs to the methylthiotransferase family. RimO subfamily. It depends on [4Fe-4S] cluster as a cofactor.

The protein resides in the cytoplasm. The enzyme catalyses L-aspartate(89)-[ribosomal protein uS12]-hydrogen + (sulfur carrier)-SH + AH2 + 2 S-adenosyl-L-methionine = 3-methylsulfanyl-L-aspartate(89)-[ribosomal protein uS12]-hydrogen + (sulfur carrier)-H + 5'-deoxyadenosine + L-methionine + A + S-adenosyl-L-homocysteine + 2 H(+). In terms of biological role, catalyzes the methylthiolation of an aspartic acid residue of ribosomal protein uS12. The sequence is that of Ribosomal protein uS12 methylthiotransferase RimO from Rhodopseudomonas palustris (strain BisB18).